Reading from the N-terminus, the 476-residue chain is 3-isopropylmalate dehydratase large subunit (476 aa).

3 residues coordinate [4Fe-4S] cluster: C355, C416, and C419.

It belongs to the aconitase/IPM isomerase family. LeuC type 1 subfamily. Heterodimer of LeuC and LeuD. It depends on [4Fe-4S] cluster as a cofactor.

It catalyses the reaction (2R,3S)-3-isopropylmalate = (2S)-2-isopropylmalate. It functions in the pathway amino-acid biosynthesis; L-leucine biosynthesis; L-leucine from 3-methyl-2-oxobutanoate: step 2/4. Catalyzes the isomerization between 2-isopropylmalate and 3-isopropylmalate, via the formation of 2-isopropylmaleate. This is 3-isopropylmalate dehydratase large subunit from Sphingopyxis alaskensis (strain DSM 13593 / LMG 18877 / RB2256) (Sphingomonas alaskensis).